Here is a 617-residue protein sequence, read N- to C-terminus: Acetolactate synthase large subunit (617 aa).

Glu71 contacts thiamine diphosphate. Residues Arg173, 281–302, and 324–343 contribute to the FAD site; these read HGTA…VGAR and EIDP…VLGD. A thiamine pyrophosphate binding region spans residues 413–492; it reads QHQMWAAQHL…VKVVIVNNHW (80 aa). Asp463 and Asn490 together coordinate Mg(2+).

The protein belongs to the TPP enzyme family. As to quaternary structure, dimer of large and small chains. The cofactor is Mg(2+). Requires thiamine diphosphate as cofactor.

It catalyses the reaction 2 pyruvate + H(+) = (2S)-2-acetolactate + CO2. It participates in amino-acid biosynthesis; L-isoleucine biosynthesis; L-isoleucine from 2-oxobutanoate: step 1/4. Its pathway is amino-acid biosynthesis; L-valine biosynthesis; L-valine from pyruvate: step 1/4. The sequence is that of Acetolactate synthase large subunit (ilvB) from Parasynechococcus marenigrum (strain WH8102).